Consider the following 262-residue polypeptide: Ribosomal RNA small subunit methyltransferase A (262 aa).

Positions 14, 16, 41, 63, 85, and 105 each coordinate S-adenosyl-L-methionine.

This sequence belongs to the class I-like SAM-binding methyltransferase superfamily. rRNA adenine N(6)-methyltransferase family. RsmA subfamily.

It is found in the cytoplasm. It catalyses the reaction adenosine(1518)/adenosine(1519) in 16S rRNA + 4 S-adenosyl-L-methionine = N(6)-dimethyladenosine(1518)/N(6)-dimethyladenosine(1519) in 16S rRNA + 4 S-adenosyl-L-homocysteine + 4 H(+). Functionally, specifically dimethylates two adjacent adenosines (A1518 and A1519) in the loop of a conserved hairpin near the 3'-end of 16S rRNA in the 30S particle. May play a critical role in biogenesis of 30S subunits. The protein is Ribosomal RNA small subunit methyltransferase A of Maridesulfovibrio salexigens (strain ATCC 14822 / DSM 2638 / NCIMB 8403 / VKM B-1763) (Desulfovibrio salexigens).